The sequence spans 167 residues: MQDEFDLFRTETKGIKPIKQDTFVAPRQKRDQKKIELKELRAKEDTLFYFSDEYEPLLNDNDGVVKYLRDGEDSHLLKQLRRGDFSPELFLDLHGLTREQAKQELAALLLACENEHVDCASIMTGYGTFTLKKQIPRWLVQHPKVRALHQAPREWGGEAAILILVDL.

The Smr domain occupies 91-166 (LDLHGLTREQ…GEAAILILVD (76 aa)).

It belongs to the SmrB family. As to quaternary structure, associates with collided ribosomes, but not with correctly translating polysomes.

In terms of biological role, acts as a ribosome collision sensor. Detects stalled/collided disomes (pairs of ribosomes where the leading ribosome is stalled and a second ribosome has collided with it) and endonucleolytically cleaves mRNA at the 5' boundary of the stalled ribosome. Stalled/collided disomes form a new interface (primarily via the 30S subunits) that binds SmrB. Cleaved mRNA becomes available for tmRNA ligation, leading to ribosomal subunit dissociation and rescue of stalled ribosomes. The sequence is that of Ribosome rescue factor SmrB from Haemophilus influenzae (strain ATCC 51907 / DSM 11121 / KW20 / Rd).